The sequence spans 607 residues: Pogo transposable element with KRAB domain (607 aa).

Residues 8 to 29 (LNLTLKEEQKEEEVEIQELEDG) are a coiled coil. Residue K13 forms a Glycyl lysine isopeptide (Lys-Gly) (interchain with G-Cter in SUMO2) linkage. The region spanning 47–118 (ALFDEVAIYF…DEWRLQGVTF (72 aa)) is the KRAB domain. One can recognise an HTH CENPB-type domain in the interval 250–323 (AFRGPKNGRF…MRRYDLSLRH (74 aa)). Positions 355–567 (YEVAQMGNAD…ISSESIVQGF (213 aa)) constitute a DDE-1 domain. A Glycyl lysine isopeptide (Lys-Gly) (interchain with G-Cter in SUMO2) cross-link involves residue K384. The interval 588–607 (GELPKEPPKECGPESVAEGD) is disordered. Over residues 589–599 (ELPKEPPKECG) the composition is skewed to basic and acidic residues.

The protein resides in the nucleus. The sequence is that of Pogo transposable element with KRAB domain (Pogk) from Mus musculus (Mouse).